A 265-amino-acid chain; its full sequence is Type II pantothenate kinase (265 aa).

6-13 (DAGGTLIK) provides a ligand contact to ATP. Glu70 acts as the Proton acceptor in catalysis. Residues Thr99, 121–125 (GGMIQ), Tyr137, and Ser225 each bind ATP.

The protein belongs to the type II pantothenate kinase family. As to quaternary structure, homodimer.

It localises to the cytoplasm. It carries out the reaction (R)-pantothenate + ATP = (R)-4'-phosphopantothenate + ADP + H(+). The protein operates within cofactor biosynthesis; coenzyme A biosynthesis; CoA from (R)-pantothenate: step 1/5. In terms of biological role, catalyzes the phosphorylation of pantothenate (Pan), the first step in CoA biosynthesis. This Staphylococcus epidermidis (strain ATCC 12228 / FDA PCI 1200) protein is Type II pantothenate kinase.